A 156-amino-acid chain; its full sequence is Probable cyclic pyranopterin monophosphate synthase (156 aa).

Residues 74-76 and 110-111 contribute to the substrate site; these read LCH and ME. Residue D125 is part of the active site.

Belongs to the MoaC family. Homohexamer; trimer of dimers.

It carries out the reaction (8S)-3',8-cyclo-7,8-dihydroguanosine 5'-triphosphate = cyclic pyranopterin phosphate + diphosphate. It functions in the pathway cofactor biosynthesis; molybdopterin biosynthesis. Catalyzes the conversion of (8S)-3',8-cyclo-7,8-dihydroguanosine 5'-triphosphate to cyclic pyranopterin monophosphate (cPMP). This chain is Probable cyclic pyranopterin monophosphate synthase, found in Thermococcus onnurineus (strain NA1).